Consider the following 187-residue polypeptide: Small ribosomal subunit protein uS5 (187 aa).

Positions 1-20 (MAERENRRDRRDDRSREETP) are disordered. The S5 DRBM domain maps to 22–85 (FADRLVAINR…EQAKRQMIRV (64 aa)).

Belongs to the universal ribosomal protein uS5 family. In terms of assembly, part of the 30S ribosomal subunit. Contacts proteins S4 and S8.

Its function is as follows. With S4 and S12 plays an important role in translational accuracy. Located at the back of the 30S subunit body where it stabilizes the conformation of the head with respect to the body. The sequence is that of Small ribosomal subunit protein uS5 from Cereibacter sphaeroides (strain ATCC 17029 / ATH 2.4.9) (Rhodobacter sphaeroides).